The primary structure comprises 424 residues: Serine--tRNA ligase (424 aa).

229–231 (TAE) contributes to the L-serine binding site. 260–262 (RSE) contributes to the ATP binding site. Glutamate 283 contributes to the L-serine binding site. An ATP-binding site is contributed by 347–350 (EISS). Serine 383 provides a ligand contact to L-serine.

It belongs to the class-II aminoacyl-tRNA synthetase family. Type-1 seryl-tRNA synthetase subfamily. As to quaternary structure, homodimer. The tRNA molecule binds across the dimer.

The protein resides in the cytoplasm. The enzyme catalyses tRNA(Ser) + L-serine + ATP = L-seryl-tRNA(Ser) + AMP + diphosphate + H(+). The catalysed reaction is tRNA(Sec) + L-serine + ATP = L-seryl-tRNA(Sec) + AMP + diphosphate + H(+). It functions in the pathway aminoacyl-tRNA biosynthesis; selenocysteinyl-tRNA(Sec) biosynthesis; L-seryl-tRNA(Sec) from L-serine and tRNA(Sec): step 1/1. Catalyzes the attachment of serine to tRNA(Ser). Is also able to aminoacylate tRNA(Sec) with serine, to form the misacylated tRNA L-seryl-tRNA(Sec), which will be further converted into selenocysteinyl-tRNA(Sec). The chain is Serine--tRNA ligase from Gluconacetobacter diazotrophicus (strain ATCC 49037 / DSM 5601 / CCUG 37298 / CIP 103539 / LMG 7603 / PAl5).